A 334-amino-acid polypeptide reads, in one-letter code: Glycerol-3-phosphate dehydrogenase [NAD(P)+] (334 aa).

Residues tryptophan 13, arginine 33, and lysine 106 each contribute to the NADPH site. Positions 106, 137, and 139 each coordinate sn-glycerol 3-phosphate. Residue alanine 141 participates in NADPH binding. Sn-glycerol 3-phosphate is bound by residues lysine 192, aspartate 245, serine 255, arginine 256, and asparagine 257. Lysine 192 acts as the Proton acceptor in catalysis. Arginine 256 is a binding site for NADPH. Residues valine 280 and glutamate 282 each coordinate NADPH.

It belongs to the NAD-dependent glycerol-3-phosphate dehydrogenase family.

It localises to the cytoplasm. The enzyme catalyses sn-glycerol 3-phosphate + NAD(+) = dihydroxyacetone phosphate + NADH + H(+). It catalyses the reaction sn-glycerol 3-phosphate + NADP(+) = dihydroxyacetone phosphate + NADPH + H(+). It participates in membrane lipid metabolism; glycerophospholipid metabolism. Catalyzes the reduction of the glycolytic intermediate dihydroxyacetone phosphate (DHAP) to sn-glycerol 3-phosphate (G3P), the key precursor for phospholipid synthesis. This Chlamydia abortus (strain DSM 27085 / S26/3) (Chlamydophila abortus) protein is Glycerol-3-phosphate dehydrogenase [NAD(P)+].